We begin with the raw amino-acid sequence, 117 residues long: cAMP-regulated phosphoprotein 19-A (117 aa).

Residues 1 to 37 (MSGENQETKAQEESSALEQKEIDDKVVSPEKSEEIKL) show a composition bias toward basic and acidic residues. Positions 1–54 (MSGENQETKAQEESSALEQKEIDDKVVSPEKSEEIKLKARYPNLGPKPGGSDFL) are disordered. Ser-28 is subject to Phosphoserine; by CDK2. At Ser-67 the chain carries Phosphoserine; by GWL. The segment at 78 to 117 (KNKQLPTAASDKTEVTGDHIPTPQDLPQRKPSLVASKLAG) is disordered. The residue at position 99 (Thr-99) is a Phosphothreonine; by CDK2. A Phosphoserine; by PKA modification is found at Ser-109.

This sequence belongs to the endosulfine family. As to quaternary structure, interacts (when phosphorylated at Ser-67) with ppp2r2d. Post-translationally, phosphorylation at Ser-67 by gwl during mitosis is essential for interaction with ppp2r2d (PR55-delta) and subsequent inactivation of PP2A. Phosphorylated by PKA.

The protein localises to the cytoplasm. Its function is as follows. Protein phosphatase inhibitor that specifically inhibits protein phosphatase 2A (PP2A) during mitosis. When phosphorylated at Ser-67 during mitosis, specifically interacts with ppp2r2d (PR55-delta) and inhibits its activity, leading to inactivation of PP2A, an essential condition to keep cyclin-B1-CDK1 activity high during M phase. This chain is cAMP-regulated phosphoprotein 19-A (arpp19-a), found in Xenopus laevis (African clawed frog).